We begin with the raw amino-acid sequence, 147 residues long: MRVIIQRVKGSSVRVNGEIVGQISRGLNLLVGIGNNDTESELDWMTRKCLELRLFPAEEGGDRWEKSVQEIQGELLVISQFTLYGDCRKGRRPSFSDSASPSIAKTLYDQFVAQLKDSGLKVETGIFGAMMQVTIDNDGPVTLLLER.

The Gly-cisPro motif, important for rejection of L-amino acids signature appears at 139–140 (GP).

The protein belongs to the DTD family. Homodimer.

The protein localises to the cytoplasm. It carries out the reaction glycyl-tRNA(Ala) + H2O = tRNA(Ala) + glycine + H(+). The enzyme catalyses a D-aminoacyl-tRNA + H2O = a tRNA + a D-alpha-amino acid + H(+). Functionally, an aminoacyl-tRNA editing enzyme that deacylates mischarged D-aminoacyl-tRNAs. Also deacylates mischarged glycyl-tRNA(Ala), protecting cells against glycine mischarging by AlaRS. Acts via tRNA-based rather than protein-based catalysis; rejects L-amino acids rather than detecting D-amino acids in the active site. By recycling D-aminoacyl-tRNA to D-amino acids and free tRNA molecules, this enzyme counteracts the toxicity associated with the formation of D-aminoacyl-tRNA entities in vivo and helps enforce protein L-homochirality. The sequence is that of D-aminoacyl-tRNA deacylase from Rippkaea orientalis (strain PCC 8801 / RF-1) (Cyanothece sp. (strain PCC 8801)).